The primary structure comprises 194 residues: Large ribosomal subunit protein eL15 (194 aa).

Positions 165–194 are disordered; it reads AGKKGRGLMNKGKGAEKVRPGIRANKKLGK.

The protein belongs to the eukaryotic ribosomal protein eL15 family.

This is Large ribosomal subunit protein eL15 from Methanococcus aeolicus (strain ATCC BAA-1280 / DSM 17508 / OCM 812 / Nankai-3).